The sequence spans 314 residues: NADH-ubiquinone oxidoreductase chain 2 (314 aa).

Transmembrane regions (helical) follow at residues 13–35 (LGVM…VWLG), 61–80 (YFVV…VSLM), 85–107 (VSGL…LHSW), 117–139 (WLAS…SMIL), 144–166 (LWVV…NSVR), 189–209 (VVFV…FYGC), 224–244 (AASG…GFLA), 246–266 (VLVF…GSVI), and 294–314 (IWSL…VSFI).

It belongs to the complex I subunit 2 family.

It is found in the mitochondrion inner membrane. It catalyses the reaction a ubiquinone + NADH + 5 H(+)(in) = a ubiquinol + NAD(+) + 4 H(+)(out). Core subunit of the mitochondrial membrane respiratory chain NADH dehydrogenase (Complex I) that is believed to belong to the minimal assembly required for catalysis. Complex I functions in the transfer of electrons from NADH to the respiratory chain. The immediate electron acceptor for the enzyme is believed to be ubiquinone. The chain is NADH-ubiquinone oxidoreductase chain 2 (ND2) from Mytilus edulis (Blue mussel).